The chain runs to 126 residues: Fluoride-specific ion channel FluC (126 aa).

Transmembrane regions (helical) follow at residues 5-25 (GFVA…FFSV), 36-56 (YGTL…VAFF), 69-89 (LAVT…SEVI), and 99-119 (WAML…AFGI). The Na(+) site is built by G76 and T79.

It belongs to the fluoride channel Fluc/FEX (TC 1.A.43) family.

It localises to the cell inner membrane. It catalyses the reaction fluoride(in) = fluoride(out). Na(+) is not transported, but it plays an essential structural role and its presence is essential for fluoride channel function. Functionally, fluoride-specific ion channel. Important for reducing fluoride concentration in the cell, thus reducing its toxicity. The chain is Fluoride-specific ion channel FluC from Cupriavidus metallidurans (strain ATCC 43123 / DSM 2839 / NBRC 102507 / CH34) (Ralstonia metallidurans).